The sequence spans 316 residues: RNA interference defective protein 11 (316 aa).

Residues C183 to C218 form an RING-type; degenerate zinc finger.

As to quaternary structure, interacts (via RING-type zinc finger domain) with rde-10.

Functionally, in complex with rde-10, required in the endogenous and exogenous siRNA pathway for biogenesis and accumulation of secondary small interfering RNA (siRNA) intermediates, such as 22G-siRNAs derived from ergo-1 targets. This is RNA interference defective protein 11 from Caenorhabditis elegans.